Reading from the N-terminus, the 602-residue chain is Probable pectinesterase/pectinesterase inhibitor 64 (602 aa).

Residues I36–A56 traverse the membrane as a helical segment. Residues S62–A91 are disordered. A compositionally biased stretch (pro residues) spans P81–I90. The pectinesterase inhibitor 64 stretch occupies residues P87–M237. N-linked (GlcNAc...) asparagine glycans are attached at residues N98, N156, N212, N229, and N315. A pectinesterase 64 region spans residues D288–D595. Substrate is bound by residues T367 and Q397. The active-site Proton donor; for pectinesterase activity is D420. C434 and C454 are joined by a disulfide. The active-site Nucleophile; for pectinesterase activity is D441. Residues N492 and N496 are each glycosylated (N-linked (GlcNAc...) asparagine). Substrate is bound by residues R518 and W520.

This sequence in the N-terminal section; belongs to the PMEI family. It in the C-terminal section; belongs to the pectinesterase family. Expressed in siliques.

The protein localises to the membrane. The catalysed reaction is [(1-&gt;4)-alpha-D-galacturonosyl methyl ester](n) + n H2O = [(1-&gt;4)-alpha-D-galacturonosyl](n) + n methanol + n H(+). Its pathway is glycan metabolism; pectin degradation; 2-dehydro-3-deoxy-D-gluconate from pectin: step 1/5. Acts in the modification of cell walls via demethylesterification of cell wall pectin. The protein is Probable pectinesterase/pectinesterase inhibitor 64 (PME64) of Arabidopsis thaliana (Mouse-ear cress).